Consider the following 492-residue polypeptide: DEAD-box ATP-dependent RNA helicase RhpA (492 aa).

Positions 20-48 (PSFNDLGLKESVLKSVYEAGFTSPSPIQE) match the Q motif motif. The Helicase ATP-binding domain maps to 51-220 (IPAVLQGRDV…DKILENPIKI (170 aa)). Residue 64 to 71 (AQTGTGKT) coordinates ATP. The DEAD box signature appears at 168–171 (DESD). A Helicase C-terminal domain is found at 231 to 393 (DITQRFYVIN…EIPTINENQI (163 aa)). Residues 445-492 (AIQNPKEKTPKPSNKKTPQHERARSFKKGQHRDRHPKTNHYSKKPKRR) are disordered. Basic residues predominate over residues 469 to 492 (SFKKGQHRDRHPKTNHYSKKPKRR).

It belongs to the DEAD box helicase family. As to quaternary structure, homodimer. Interacts with RNase J (rnj), might be a member of a minimal RNA degradosome complex.

The protein localises to the cytoplasm. The enzyme catalyses ATP + H2O = ADP + phosphate + H(+). DEAD-box RNA helicase probably involved in RNA degradation. Unwinds dsRNA in both 5'- and 3'-directions. In Helicobacter pylori (strain ATCC 700392 / 26695) (Campylobacter pylori), this protein is DEAD-box ATP-dependent RNA helicase RhpA (rhpA).